The sequence spans 78 residues: Small ribosomal subunit protein bS16c (78 aa).

This sequence belongs to the bacterial ribosomal protein bS16 family.

Its subcellular location is the plastid. The protein resides in the chloroplast. This chain is Small ribosomal subunit protein bS16c, found in Amborella trichopoda.